Reading from the N-terminus, the 268-residue chain is Phosphatidylglycerol--prolipoprotein diacylglyceryl transferase (268 aa).

7 consecutive transmembrane segments (helical) span residues 27–47, 66–86, 104–124, 130–150, 181–201, 208–228, and 242–262; these read PALRWYGFTYLVGFVAAMWLL, LLFYGFLGVILGGRIGYVLFY, GGMSFHGGLIGVITAMIYITW, FFAVADMVAPVVPIGLGAGRI, PSQLYQFALEGVALFLLLYWF, VGAVSGMFLLGYGIFRVIVET, and LMTMGQILSVPMILFGLYLIL. Arginine 149 contacts a 1,2-diacyl-sn-glycero-3-phospho-(1'-sn-glycerol).

The protein belongs to the Lgt family.

It localises to the cell inner membrane. It catalyses the reaction L-cysteinyl-[prolipoprotein] + a 1,2-diacyl-sn-glycero-3-phospho-(1'-sn-glycerol) = an S-1,2-diacyl-sn-glyceryl-L-cysteinyl-[prolipoprotein] + sn-glycerol 1-phosphate + H(+). It functions in the pathway protein modification; lipoprotein biosynthesis (diacylglyceryl transfer). Functionally, catalyzes the transfer of the diacylglyceryl group from phosphatidylglycerol to the sulfhydryl group of the N-terminal cysteine of a prolipoprotein, the first step in the formation of mature lipoproteins. This is Phosphatidylglycerol--prolipoprotein diacylglyceryl transferase from Shewanella oneidensis (strain ATCC 700550 / JCM 31522 / CIP 106686 / LMG 19005 / NCIMB 14063 / MR-1).